Consider the following 373-residue polypeptide: tRNA-specific 2-thiouridylase MnmA (373 aa).

Residues 12–19 (GMSGGVDS) and M38 contribute to the ATP site. The segment at 98 to 100 (NPD) is interaction with target base in tRNA. C103 acts as the Nucleophile in catalysis. C103 and C200 are disulfide-bonded. ATP is bound at residue G127. The tract at residues 150 to 152 (KDQ) is interaction with tRNA. The active-site Cysteine persulfide intermediate is C200. The interval 312 to 313 (RY) is interaction with tRNA.

This sequence belongs to the MnmA/TRMU family.

It is found in the cytoplasm. The catalysed reaction is S-sulfanyl-L-cysteinyl-[protein] + uridine(34) in tRNA + AH2 + ATP = 2-thiouridine(34) in tRNA + L-cysteinyl-[protein] + A + AMP + diphosphate + H(+). Catalyzes the 2-thiolation of uridine at the wobble position (U34) of tRNA, leading to the formation of s(2)U34. The chain is tRNA-specific 2-thiouridylase MnmA from Streptococcus thermophilus (strain ATCC BAA-491 / LMD-9).